Consider the following 121-residue polypeptide: Large ribosomal subunit protein bL19 (121 aa).

This sequence belongs to the bacterial ribosomal protein bL19 family.

Functionally, this protein is located at the 30S-50S ribosomal subunit interface and may play a role in the structure and function of the aminoacyl-tRNA binding site. This chain is Large ribosomal subunit protein bL19, found in Porphyromonas gingivalis (strain ATCC BAA-308 / W83).